Here is a 352-residue protein sequence, read N- to C-terminus: Photosystem II D2 protein (352 aa).

A helical membrane pass occupies residues 40 to 60; the sequence is CAFMALGGWLTGTTFVTSWYT. His-117 serves as a coordination point for chlorophyll a. The helical transmembrane segment at 124–140 threads the bilayer; it reads GFMLRQFEIARLVGIRP. Residues Gln-129 and Asn-142 each contribute to the pheophytin a site. Residues 152–165 form a helical membrane-spanning segment; that stretch reads VFVSVFLMYPLGQS. His-197 contacts chlorophyll a. A helical transmembrane segment spans residues 207-227; sequence GALLCAIHGATVENTLFEDSD. A plastoquinone contacts are provided by His-214 and Phe-261. His-214 lines the Fe cation pocket. Residue His-268 participates in Fe cation binding. A helical membrane pass occupies residues 278–294; it reads GLWMSSVGIVGLALNLR.

Belongs to the reaction center PufL/M/PsbA/D family. PSII is composed of 1 copy each of membrane proteins PsbA, PsbB, PsbC, PsbD, PsbE, PsbF, PsbH, PsbI, PsbJ, PsbK, PsbL, PsbM, PsbT, PsbX, PsbY, PsbZ, Psb30/Ycf12, peripheral proteins PsbO, CyanoQ (PsbQ), PsbU, PsbV and a large number of cofactors. It forms dimeric complexes. It depends on The D1/D2 heterodimer binds P680, chlorophylls that are the primary electron donor of PSII, and subsequent electron acceptors. It shares a non-heme iron and each subunit binds pheophytin, quinone, additional chlorophylls, carotenoids and lipids. There is also a Cl(-1) ion associated with D1 and D2, which is required for oxygen evolution. The PSII complex binds additional chlorophylls, carotenoids and specific lipids. as a cofactor.

Its subcellular location is the cellular thylakoid membrane. It carries out the reaction 2 a plastoquinone + 4 hnu + 2 H2O = 2 a plastoquinol + O2. Its function is as follows. Photosystem II (PSII) is a light-driven water:plastoquinone oxidoreductase that uses light energy to abstract electrons from H(2)O, generating O(2) and a proton gradient subsequently used for ATP formation. It consists of a core antenna complex that captures photons, and an electron transfer chain that converts photonic excitation into a charge separation. The D1/D2 (PsbA/PsbD) reaction center heterodimer binds P680, the primary electron donor of PSII as well as several subsequent electron acceptors. D2 is needed for assembly of a stable PSII complex. In Picosynechococcus sp. (strain ATCC 27264 / PCC 7002 / PR-6) (Agmenellum quadruplicatum), this protein is Photosystem II D2 protein.